A 509-amino-acid polypeptide reads, in one-letter code: L-arabinose isomerase (509 aa).

The Mn(2+) site is built by Glu-313, Glu-340, His-357, and His-456.

Belongs to the arabinose isomerase family. Mn(2+) is required as a cofactor.

It catalyses the reaction beta-L-arabinopyranose = L-ribulose. It participates in carbohydrate degradation; L-arabinose degradation via L-ribulose; D-xylulose 5-phosphate from L-arabinose (bacterial route): step 1/3. Catalyzes the conversion of L-arabinose to L-ribulose. This Bacteroides thetaiotaomicron (strain ATCC 29148 / DSM 2079 / JCM 5827 / CCUG 10774 / NCTC 10582 / VPI-5482 / E50) protein is L-arabinose isomerase.